The primary structure comprises 127 residues: Small ribosomal subunit protein uS11 (127 aa).

The protein belongs to the universal ribosomal protein uS11 family. As to quaternary structure, part of the 30S ribosomal subunit.

In terms of biological role, located on the platform of the 30S subunit. The polypeptide is Small ribosomal subunit protein uS11 (Natronomonas pharaonis (strain ATCC 35678 / DSM 2160 / CIP 103997 / JCM 8858 / NBRC 14720 / NCIMB 2260 / Gabara) (Halobacterium pharaonis)).